A 1417-amino-acid polypeptide reads, in one-letter code: DExH-box ATP-dependent RNA helicase DExH4, chloroplastic (1417 aa).

Residues 1 to 12 (MAPTKKPQKNKQ) show a composition bias toward basic residues. The disordered stretch occupies residues 1 to 37 (MAPTKKPQKNKQSKNEIASSLIPNSGHKKPSKAPKLL). Residues 1-61 (MAPTKKPQKN…NFRRTPSPVT (61 aa)) constitute a chloroplast transit peptide. The Helicase ATP-binding domain occupies 607 to 781 (LQKLKEKDVL…FGQCPIITAQ (175 aa)). 620-627 (GETGSGKT) is an ATP binding site. The short motif at 722 to 725 (DEVH) is the DEIH box element. The Helicase C-terminal domain occupies 868 to 1043 (LLEELICHID…ELCLHIKLLG (176 aa)).

It belongs to the DExH box helicase family.

It is found in the plastid. Its subcellular location is the chloroplast. The enzyme catalyses ATP + H2O = ADP + phosphate + H(+). This chain is DExH-box ATP-dependent RNA helicase DExH4, chloroplastic, found in Arabidopsis thaliana (Mouse-ear cress).